The chain runs to 82 residues: Photosystem I iron-sulfur center (82 aa).

2 4Fe-4S ferredoxin-type domains span residues 2 to 31 and 40 to 69; these read AHTV…MVPW and IAAA…IRVY. [4Fe-4S] cluster contacts are provided by C11, C14, C17, C21, C49, C52, C55, and C59.

As to quaternary structure, the cyanobacterial PSI reaction center is composed of one copy each of PsaA,B,C,D,E,F,I,J,K,L,M and X, and forms trimeric complexes. [4Fe-4S] cluster is required as a cofactor.

The protein resides in the cellular thylakoid membrane. The catalysed reaction is reduced [plastocyanin] + hnu + oxidized [2Fe-2S]-[ferredoxin] = oxidized [plastocyanin] + reduced [2Fe-2S]-[ferredoxin]. Its function is as follows. Apoprotein for the two 4Fe-4S centers FA and FB of photosystem I (PSI); essential for photochemical activity. FB is the terminal electron acceptor of PSI, donating electrons to ferredoxin. The C-terminus interacts with PsaA/B/D and helps assemble the protein into the PSI complex. Required for binding of PsaD and PsaE to PSI. PSI is a plastocyanin/cytochrome c6-ferredoxin oxidoreductase, converting photonic excitation into a charge separation, which transfers an electron from the donor P700 chlorophyll pair to the spectroscopically characterized acceptors A0, A1, FX, FA and FB in turn. The polypeptide is Photosystem I iron-sulfur center (Synechococcus sp. (strain JA-3-3Ab) (Cyanobacteria bacterium Yellowstone A-Prime)).